The primary structure comprises 894 residues: Peroxisomal hydratase-dehydrogenase-epimerase (894 aa).

Short-chain dehydrogenase like regions lie at residues 6 to 230 (RFDG…HKNN) and 311 to 523 (DFKG…CSDK). 7 residues coordinate NADP(+): Val-14, Lys-53, Asn-99, Arg-132, Tyr-164, Lys-168, and Ala-197. The active-site Proton acceptor is the Tyr-164. Lys-168 serves as the catalytic Lowers pKa of active site Tyr. Catalysis depends on Tyr-458, which acts as the Proton acceptor. His-693, Gly-694, and Lys-723 together coordinate (3R)-3-hydroxydecanoyl-CoA. The disordered stretch occupies residues 763–782 (KKPADRGASTAANKPPARSP). One can recognise a MaoC-like domain in the interval 776 to 887 (KPPARSPDAV…VKETGKLAIS (112 aa)). Residues Asp-803, Asn-805, Gly-826, Phe-851, and Gly-853 each coordinate (3R)-3-hydroxydecanoyl-CoA.

It belongs to the short-chain dehydrogenases/reductases (SDR) family. Monomer.

Its subcellular location is the peroxisome. The catalysed reaction is a (3R)-3-hydroxyacyl-CoA = a (2E)-enoyl-CoA + H2O. The enzyme catalyses a (3R)-3-hydroxyacyl-CoA + NAD(+) = a 3-oxoacyl-CoA + NADH + H(+). It participates in lipid metabolism; fatty acid beta-oxidation. Its function is as follows. Second trifunctional enzyme acting on the beta-oxidation pathway for fatty acids, possessing hydratase-dehydrogenase-epimerase activities. Converts trans-2-enoyl-CoA via D-3-hydroxyacyl-CoA to 3-ketoacyl-CoA. This Neurospora crassa (strain ATCC 24698 / 74-OR23-1A / CBS 708.71 / DSM 1257 / FGSC 987) protein is Peroxisomal hydratase-dehydrogenase-epimerase (fox-2).